A 91-amino-acid chain; its full sequence is Small ribosomal subunit protein uS19 (91 aa).

Belongs to the universal ribosomal protein uS19 family.

Its function is as follows. Protein S19 forms a complex with S13 that binds strongly to the 16S ribosomal RNA. This Parasynechococcus marenigrum (strain WH8102) protein is Small ribosomal subunit protein uS19.